Consider the following 323-residue polypeptide: Calcium homeostasis modulator protein 2 (323 aa).

Residues methionine 1–valine 21 lie on the Cytoplasmic side of the membrane. Positions leucine 14–phenylalanine 39 are central pore. The helical transmembrane segment at methionine 22–alanine 43 threads the bilayer. Topologically, residues phenylalanine 44–arginine 52 are extracellular. 2 disulfides stabilise this stretch: cysteine 46–cysteine 130 and cysteine 48–cysteine 162. A helical transmembrane segment spans residues asparagine 53 to asparagine 76. The Cytoplasmic segment spans residues asparagine 77 to leucine 101. The chain crosses the membrane as a helical span at residues leucine 102 to leucine 132. At serine 133 to arginine 179 the chain is on the extracellular side. The hemichannel docking stretch occupies residues aspartate 145–histidine 152. A helical membrane pass occupies residues leucine 180–lysine 206. At histidine 207 to alanine 323 the chain is on the cytoplasmic side. The interval tyrosine 214 to phenylalanine 251 is intersubunit interaction.

It belongs to the CALHM family. Homo-undecamer. Two undecameric hemichannels can assemble in a head-to-head manner to form a gap junction. Neuron, astrocyte, and microglia.

It localises to the cell membrane. The enzyme catalyses ATP(in) = ATP(out). Inhibited by divalent cations such as Co(2+) and Ni(2+). Pore-forming subunit of Ca(2+) homeostasis modulator channels. Mediates ATP release from astrocytes and ATP-induced Ca(2+) influx in microglia thus regulating neuronal ATP and Ca(2+) homeostasis, synaptic transmission and neuroinflammatory response. May form intercellular gap junctions. The gating mechanism remains unknown. The polypeptide is Calcium homeostasis modulator protein 2 (Mus musculus (Mouse)).